Reading from the N-terminus, the 131-residue chain is Ribonuclease P protein component (131 aa).

Belongs to the RnpA family. In terms of assembly, consists of a catalytic RNA component (M1 or rnpB) and a protein subunit.

The enzyme catalyses Endonucleolytic cleavage of RNA, removing 5'-extranucleotides from tRNA precursor.. Its function is as follows. RNaseP catalyzes the removal of the 5'-leader sequence from pre-tRNA to produce the mature 5'-terminus. It can also cleave other RNA substrates such as 4.5S RNA. The protein component plays an auxiliary but essential role in vivo by binding to the 5'-leader sequence and broadening the substrate specificity of the ribozyme. In Stutzerimonas stutzeri (strain A1501) (Pseudomonas stutzeri), this protein is Ribonuclease P protein component.